The primary structure comprises 474 residues: Bifunctional protein HldE (474 aa).

The segment at 1-318 (MKMTLPDFHC…ENAIRGRAET (318 aa)) is ribokinase. Residue 195–198 (NLSE) coordinates ATP. Aspartate 264 is an active-site residue. The cytidylyltransferase stretch occupies residues 344–474 (MTNGCFDILH…TNIIKAIKNQ (131 aa)).

The protein in the N-terminal section; belongs to the carbohydrate kinase PfkB family. It in the C-terminal section; belongs to the cytidylyltransferase family. As to quaternary structure, homodimer.

The catalysed reaction is D-glycero-beta-D-manno-heptose 7-phosphate + ATP = D-glycero-beta-D-manno-heptose 1,7-bisphosphate + ADP + H(+). It carries out the reaction D-glycero-beta-D-manno-heptose 1-phosphate + ATP + H(+) = ADP-D-glycero-beta-D-manno-heptose + diphosphate. It functions in the pathway nucleotide-sugar biosynthesis; ADP-L-glycero-beta-D-manno-heptose biosynthesis; ADP-L-glycero-beta-D-manno-heptose from D-glycero-beta-D-manno-heptose 7-phosphate: step 1/4. The protein operates within nucleotide-sugar biosynthesis; ADP-L-glycero-beta-D-manno-heptose biosynthesis; ADP-L-glycero-beta-D-manno-heptose from D-glycero-beta-D-manno-heptose 7-phosphate: step 3/4. Its pathway is bacterial outer membrane biogenesis; LPS core biosynthesis. In terms of biological role, catalyzes the phosphorylation of D-glycero-D-manno-heptose 7-phosphate at the C-1 position to selectively form D-glycero-beta-D-manno-heptose-1,7-bisphosphate. Functionally, catalyzes the ADP transfer from ATP to D-glycero-beta-D-manno-heptose 1-phosphate, yielding ADP-D-glycero-beta-D-manno-heptose. The sequence is that of Bifunctional protein HldE from Photorhabdus laumondii subsp. laumondii (strain DSM 15139 / CIP 105565 / TT01) (Photorhabdus luminescens subsp. laumondii).